A 162-amino-acid polypeptide reads, in one-letter code: UPF0114 protein Sfri_3655 (162 aa).

Transmembrane regions (helical) follow at residues 15 to 35, 53 to 73, and 136 to 156; these read IMAPIYLGLSLILFALGIKFF, LVLITLSLIDITLVGGLLIMV, and IMWYLLIHITFVLSAFAMGYL.

This sequence belongs to the UPF0114 family.

It is found in the cell membrane. The protein is UPF0114 protein Sfri_3655 of Shewanella frigidimarina (strain NCIMB 400).